A 178-amino-acid polypeptide reads, in one-letter code: Cytochrome b6-f complex iron-sulfur subunit (178 aa).

Residues 20 to 42 (LLTFGTVTGVALGALYPVAQYFT) traverse the membrane as a helical segment. Residues 71-161 (THPVGDRSLV…VSIEDDQVLV (91 aa)) enclose the Rieske domain. Positions 107, 109, 125, and 128 each coordinate [2Fe-2S] cluster. A disulfide bridge connects residues Cys-112 and Cys-127.

This sequence belongs to the Rieske iron-sulfur protein family. As to quaternary structure, the 4 large subunits of the cytochrome b6-f complex are cytochrome b6, subunit IV (17 kDa polypeptide, PetD), cytochrome f and the Rieske protein, while the 4 small subunits are PetG, PetL, PetM and PetN. The complex functions as a dimer. [2Fe-2S] cluster is required as a cofactor.

Its subcellular location is the cellular thylakoid membrane. The enzyme catalyses 2 oxidized [plastocyanin] + a plastoquinol + 2 H(+)(in) = 2 reduced [plastocyanin] + a plastoquinone + 4 H(+)(out). Component of the cytochrome b6-f complex, which mediates electron transfer between photosystem II (PSII) and photosystem I (PSI), cyclic electron flow around PSI, and state transitions. The protein is Cytochrome b6-f complex iron-sulfur subunit of Prochlorococcus marinus (strain NATL1A).